Consider the following 257-residue polypeptide: Acetylglutamate kinase (257 aa).

Substrate contacts are provided by residues G43–G44, R65, and N157. Residues D180 to L185 and I208 to T210 each bind ATP.

It belongs to the acetylglutamate kinase family. ArgB subfamily. Homodimer.

The protein resides in the cytoplasm. It catalyses the reaction N-acetyl-L-glutamate + ATP = N-acetyl-L-glutamyl 5-phosphate + ADP. Its pathway is amino-acid biosynthesis; L-arginine biosynthesis; N(2)-acetyl-L-ornithine from L-glutamate: step 2/4. Its function is as follows. Catalyzes the ATP-dependent phosphorylation of N-acetyl-L-glutamate. The polypeptide is Acetylglutamate kinase (Sodalis glossinidius (strain morsitans)).